Here is a 245-residue protein sequence, read N- to C-terminus: Enolase-phosphatase E1 (245 aa).

This sequence belongs to the HAD-like hydrolase superfamily. MasA/MtnC family. As to quaternary structure, monomer. Requires Mg(2+) as cofactor.

It carries out the reaction 5-methylsulfanyl-2,3-dioxopentyl phosphate + H2O = 1,2-dihydroxy-5-(methylsulfanyl)pent-1-en-3-one + phosphate. It functions in the pathway amino-acid biosynthesis; L-methionine biosynthesis via salvage pathway; L-methionine from S-methyl-5-thio-alpha-D-ribose 1-phosphate: step 3/6. Its pathway is amino-acid biosynthesis; L-methionine biosynthesis via salvage pathway; L-methionine from S-methyl-5-thio-alpha-D-ribose 1-phosphate: step 4/6. Its function is as follows. Bifunctional enzyme that catalyzes the enolization of 2,3-diketo-5-methylthiopentyl-1-phosphate (DK-MTP-1-P) into the intermediate 2-hydroxy-3-keto-5-methylthiopentenyl-1-phosphate (HK-MTPenyl-1-P), which is then dephosphorylated to form the acireductone 1,2-dihydroxy-3-keto-5-methylthiopentene (DHK-MTPene). This Parasynechococcus marenigrum (strain WH8102) protein is Enolase-phosphatase E1.